Here is a 105-residue protein sequence, read N- to C-terminus: Large ribosomal subunit protein uL24 (105 aa).

It belongs to the universal ribosomal protein uL24 family. As to quaternary structure, part of the 50S ribosomal subunit.

Its function is as follows. One of two assembly initiator proteins, it binds directly to the 5'-end of the 23S rRNA, where it nucleates assembly of the 50S subunit. Functionally, one of the proteins that surrounds the polypeptide exit tunnel on the outside of the subunit. This Methylobacillus flagellatus (strain ATCC 51484 / DSM 6875 / VKM B-1610 / KT) protein is Large ribosomal subunit protein uL24.